The sequence spans 432 residues: Adenylosuccinate synthetase (432 aa).

GTP is bound by residues 13-19 (GDEGKGK) and 41-43 (GHT). D14 acts as the Proton acceptor in catalysis. Residues D14 and G41 each coordinate Mg(2+). Residues 14 to 17 (DEGK), 39 to 42 (NAGH), T130, R144, Q225, T240, and R304 contribute to the IMP site. The Proton donor role is filled by H42. 300 to 306 (ATTGRRR) contributes to the substrate binding site. GTP is bound by residues R306, 332-334 (KLD), and 415-417 (STG).

Belongs to the adenylosuccinate synthetase family. In terms of assembly, homodimer. Mg(2+) serves as cofactor.

The protein resides in the cytoplasm. The enzyme catalyses IMP + L-aspartate + GTP = N(6)-(1,2-dicarboxyethyl)-AMP + GDP + phosphate + 2 H(+). The protein operates within purine metabolism; AMP biosynthesis via de novo pathway; AMP from IMP: step 1/2. Functionally, plays an important role in the de novo pathway of purine nucleotide biosynthesis. Catalyzes the first committed step in the biosynthesis of AMP from IMP. This is Adenylosuccinate synthetase from Erwinia tasmaniensis (strain DSM 17950 / CFBP 7177 / CIP 109463 / NCPPB 4357 / Et1/99).